The chain runs to 536 residues: Probable protein S-acyltransferase 23 (536 aa).

The segment at 1 to 23 is disordered; it reads MDSSEIEVVPLDSNSHQSPTESP. The segment covering 12 to 23 has biased composition (polar residues); sequence DSNSHQSPTESP. 6 ANK repeats span residues 57–86, 90–119, 123–153, 157–186, 190–219, and 225–254; these read NGFY…DVNS, IQQT…RIEA, NGFR…DYNA, EGRS…CQNR, TGCT…KEEL, and TGST…TRKN. The next 2 helical transmembrane spans lie at 270–290 and 298–318; these read YAPM…TSIV and ITAM…YALI. The DHHC domain maps to 363-413; that stretch reads QLCPTCKIIRPVRSKHCPTCKRCVEQFDHHCPWISNCVGKKNKRYFLVFVI. Cysteine 393 (S-palmitoyl cysteine intermediate) is an active-site residue. The next 2 helical transmembrane spans lie at 407-427 and 454-474; these read YFLV…TTAV and AAVF…LTIS.

Belongs to the DHHC palmitoyltransferase family. In terms of tissue distribution, expressed in roots, shoots, flowers and pollen.

The protein localises to the golgi apparatus membrane. It carries out the reaction L-cysteinyl-[protein] + hexadecanoyl-CoA = S-hexadecanoyl-L-cysteinyl-[protein] + CoA. In terms of biological role, palmitoyl acyltransferase. The chain is Probable protein S-acyltransferase 23 (PAT23) from Arabidopsis thaliana (Mouse-ear cress).